The chain runs to 103 residues: Large ribosomal subunit protein bL21 (103 aa).

The protein belongs to the bacterial ribosomal protein bL21 family. Part of the 50S ribosomal subunit. Contacts protein L20.

Functionally, this protein binds to 23S rRNA in the presence of protein L20. This is Large ribosomal subunit protein bL21 from Haemophilus influenzae (strain PittEE).